Here is a 100-residue protein sequence, read N- to C-terminus: Urease subunit gamma (100 aa).

It belongs to the urease gamma subunit family. Heterotrimer of UreA (gamma), UreB (beta) and UreC (alpha) subunits. Three heterotrimers associate to form the active enzyme.

It localises to the cytoplasm. The enzyme catalyses urea + 2 H2O + H(+) = hydrogencarbonate + 2 NH4(+). It participates in nitrogen metabolism; urea degradation; CO(2) and NH(3) from urea (urease route): step 1/1. This Edwardsiella ictaluri (strain 93-146) protein is Urease subunit gamma.